The sequence spans 540 residues: Protein GDAP2 homolog (540 aa).

Positions 56–235 (RSPFPLCKDV…TYEVLAPLYF (180 aa)) constitute a Macro domain. One can recognise a CRAL-TRIO domain in the interval 371–528 (QVEDLTEVSG…YITEYDMATN (158 aa)).

It belongs to the GDAP2 family.

The protein is Protein GDAP2 homolog of Drosophila melanogaster (Fruit fly).